The sequence spans 491 residues: Aspartyl/glutamyl-tRNA(Asn/Gln) amidotransferase subunit B (491 aa).

This sequence belongs to the GatB/GatE family. GatB subfamily. As to quaternary structure, heterotrimer of A, B and C subunits.

The catalysed reaction is L-glutamyl-tRNA(Gln) + L-glutamine + ATP + H2O = L-glutaminyl-tRNA(Gln) + L-glutamate + ADP + phosphate + H(+). It catalyses the reaction L-aspartyl-tRNA(Asn) + L-glutamine + ATP + H2O = L-asparaginyl-tRNA(Asn) + L-glutamate + ADP + phosphate + 2 H(+). Its function is as follows. Allows the formation of correctly charged Asn-tRNA(Asn) or Gln-tRNA(Gln) through the transamidation of misacylated Asp-tRNA(Asn) or Glu-tRNA(Gln) in organisms which lack either or both of asparaginyl-tRNA or glutaminyl-tRNA synthetases. The reaction takes place in the presence of glutamine and ATP through an activated phospho-Asp-tRNA(Asn) or phospho-Glu-tRNA(Gln). This is Aspartyl/glutamyl-tRNA(Asn/Gln) amidotransferase subunit B from Burkholderia cenocepacia (strain ATCC BAA-245 / DSM 16553 / LMG 16656 / NCTC 13227 / J2315 / CF5610) (Burkholderia cepacia (strain J2315)).